A 316-amino-acid polypeptide reads, in one-letter code: Ribosomal RNA large subunit methyltransferase F (316 aa).

This sequence belongs to the methyltransferase superfamily. METTL16/RlmF family.

The protein localises to the cytoplasm. The enzyme catalyses adenosine(1618) in 23S rRNA + S-adenosyl-L-methionine = N(6)-methyladenosine(1618) in 23S rRNA + S-adenosyl-L-homocysteine + H(+). In terms of biological role, specifically methylates the adenine in position 1618 of 23S rRNA. This chain is Ribosomal RNA large subunit methyltransferase F, found in Pseudomonas entomophila (strain L48).